The following is a 345-amino-acid chain: Transcription factor 19 (345 aa).

The FHA domain maps to 31 to 88 (YRLGHRADLCDVALRPQQEPGLISGIHAELHAEPRGDDWRVSLEDHSSQGTLVNNVRL). Ser78 is modified (phosphoserine). Residues 190 to 227 (LTFSPSWGGPKSLPVPAPPGEMGTTPSAPPQRNRRKSV) are disordered. The PHD-type zinc finger occupies 293 to 342 (AAPCCCLPQEETVAWVQCDGCDVWFHVACVGCSIQAAREADFRCPGCRAG). Residues Cys296, Cys298, Cys310, Cys313, His318, Cys321, Cys336, and Cys339 each contribute to the Zn(2+) site.

Its subcellular location is the nucleus. Its function is as follows. Potential transcription factor that may play a role in the regulation of genes involved in cell cycle G1/S transition. May bind to regulatory elements of genes, including the promoter of the transcription factor FOXO1. This chain is Transcription factor 19 (TCF19), found in Homo sapiens (Human).